A 203-amino-acid chain; its full sequence is ATP-dependent Clp protease proteolytic subunit (203 aa).

The Nucleophile role is filled by S103. The active site involves H128.

It belongs to the peptidase S14 family. As to quaternary structure, fourteen ClpP subunits assemble into 2 heptameric rings which stack back to back to give a disk-like structure with a central cavity, resembling the structure of eukaryotic proteasomes.

The protein localises to the cytoplasm. It carries out the reaction Hydrolysis of proteins to small peptides in the presence of ATP and magnesium. alpha-casein is the usual test substrate. In the absence of ATP, only oligopeptides shorter than five residues are hydrolyzed (such as succinyl-Leu-Tyr-|-NHMec, and Leu-Tyr-Leu-|-Tyr-Trp, in which cleavage of the -Tyr-|-Leu- and -Tyr-|-Trp bonds also occurs).. Functionally, cleaves peptides in various proteins in a process that requires ATP hydrolysis. Has a chymotrypsin-like activity. Plays a major role in the degradation of misfolded proteins. This is ATP-dependent Clp protease proteolytic subunit from Nitrosococcus oceani (strain ATCC 19707 / BCRC 17464 / JCM 30415 / NCIMB 11848 / C-107).